Consider the following 464-residue polypeptide: Cyclic 2,3-diphosphoglycerate synthetase (464 aa).

Belongs to the cyclic 2,3-diphosphoglycerate synthetase family.

It is found in the cytoplasm. It catalyses the reaction (2R)-2,3-bisphosphoglycerate + ATP + H(+) = cyclic (2R)-2,3-bisphosphoglycerate + ADP + phosphate. Its activity is regulated as follows. Activity decreases in response to phosphate limitation. Catalyzes the formation of cyclic 2,3-diphosphoglycerate (cDPG) by formation of an intramolecular phosphoanhydride bond at the expense of ATP. Not able to catalyze cDPG hydrolysis. May be involved in osmotic balance. The polypeptide is Cyclic 2,3-diphosphoglycerate synthetase (cpgS) (Methanothermobacter thermautotrophicus (strain ATCC 29096 / DSM 1053 / JCM 10044 / NBRC 100330 / Delta H) (Methanobacterium thermoautotrophicum)).